The sequence spans 307 residues: Urease accessory protein UreD (307 aa).

This sequence belongs to the UreD family. As to quaternary structure, ureD, UreF and UreG form a complex that acts as a GTP-hydrolysis-dependent molecular chaperone, activating the urease apoprotein by helping to assemble the nickel containing metallocenter of UreC. The UreE protein probably delivers the nickel.

The protein localises to the cytoplasm. Required for maturation of urease via the functional incorporation of the urease nickel metallocenter. In Prochlorococcus marinus (strain NATL1A), this protein is Urease accessory protein UreD.